Reading from the N-terminus, the 419-residue chain is Innexin-2 (419 aa).

Transmembrane regions (helical) follow at residues 33–53, 108–128, 184–204, and 270–290; these read AWFT…KQYF, PLVL…WNLF, INYF…MVLL, and LYIC…AGMI.

It belongs to the pannexin family.

The protein resides in the cell membrane. It is found in the cell junction. It localises to the gap junction. Structural component of the gap junctions. This is Innexin-2 (inx-2) from Caenorhabditis elegans.